The sequence spans 231 residues: 7-cyano-7-deazaguanine synthase (231 aa).

8 to 18 (FSGGQDSTTCL) provides a ligand contact to ATP. Zn(2+) is bound by residues cysteine 188, cysteine 197, cysteine 200, and cysteine 203.

The protein belongs to the QueC family. Requires Zn(2+) as cofactor.

The enzyme catalyses 7-carboxy-7-deazaguanine + NH4(+) + ATP = 7-cyano-7-deazaguanine + ADP + phosphate + H2O + H(+). It participates in purine metabolism; 7-cyano-7-deazaguanine biosynthesis. Catalyzes the ATP-dependent conversion of 7-carboxy-7-deazaguanine (CDG) to 7-cyano-7-deazaguanine (preQ(0)). This is 7-cyano-7-deazaguanine synthase from Escherichia coli O1:K1 / APEC.